The primary structure comprises 202 residues: uncharacterized protein (202 aa).

A disordered region spans residues 179-202; that stretch reads FDEQDSTPELPPNYLLDSQKKSQG.

This is an uncharacterized protein from Haemophilus influenzae (strain ATCC 51907 / DSM 11121 / KW20 / Rd).